The primary structure comprises 122 residues: Large ribosomal subunit protein bL12 (122 aa).

Belongs to the bacterial ribosomal protein bL12 family. In terms of assembly, homodimer. Part of the ribosomal stalk of the 50S ribosomal subunit. Forms a multimeric L10(L12)X complex, where L10 forms an elongated spine to which 2 to 4 L12 dimers bind in a sequential fashion. Binds GTP-bound translation factors.

Forms part of the ribosomal stalk which helps the ribosome interact with GTP-bound translation factors. Is thus essential for accurate translation. This is Large ribosomal subunit protein bL12 from Yersinia pseudotuberculosis serotype O:1b (strain IP 31758).